We begin with the raw amino-acid sequence, 273 residues long: Imidazole glycerol phosphate synthase subunit HisF (273 aa).

Active-site residues include aspartate 11 and aspartate 134.

Belongs to the HisA/HisF family. As to quaternary structure, heterodimer of HisH and HisF.

It localises to the cytoplasm. The enzyme catalyses 5-[(5-phospho-1-deoxy-D-ribulos-1-ylimino)methylamino]-1-(5-phospho-beta-D-ribosyl)imidazole-4-carboxamide + L-glutamine = D-erythro-1-(imidazol-4-yl)glycerol 3-phosphate + 5-amino-1-(5-phospho-beta-D-ribosyl)imidazole-4-carboxamide + L-glutamate + H(+). It participates in amino-acid biosynthesis; L-histidine biosynthesis; L-histidine from 5-phospho-alpha-D-ribose 1-diphosphate: step 5/9. IGPS catalyzes the conversion of PRFAR and glutamine to IGP, AICAR and glutamate. The HisF subunit catalyzes the cyclization activity that produces IGP and AICAR from PRFAR using the ammonia provided by the HisH subunit. The polypeptide is Imidazole glycerol phosphate synthase subunit HisF (Methanosarcina mazei (strain ATCC BAA-159 / DSM 3647 / Goe1 / Go1 / JCM 11833 / OCM 88) (Methanosarcina frisia)).